Here is a 245-residue protein sequence, read N- to C-terminus: GDSL esterase/lipase At4g16220 (245 aa).

A signal peptide spans 1–24; that stretch reads MSSLVSRCQVIALLVLFFFGVCLA. Serine 37 (nucleophile) is an active-site residue.

This sequence belongs to the 'GDSL' lipolytic enzyme family.

It is found in the secreted. In Arabidopsis thaliana (Mouse-ear cress), this protein is GDSL esterase/lipase At4g16220.